The following is a 304-amino-acid chain: Nod factor export ATP-binding protein I (304 aa).

The ABC transporter domain maps to 6 to 236; the sequence is IEFDKVKKSY…EIGCDVIEIF (231 aa). 38–45 lines the ATP pocket; the sequence is GPNGAGKT.

The protein belongs to the ABC transporter superfamily. Lipooligosaccharide exporter (TC 3.A.1.102) family. As to quaternary structure, the complex is composed of two ATP-binding proteins (NodI) and two transmembrane proteins (NodJ).

It is found in the cell inner membrane. Functionally, part of the ABC transporter complex NodIJ involved in the export of the nodulation factors (Nod factors), the bacterial signal molecules that induce symbiosis and subsequent nodulation induction. Nod factors are LCO (lipo-chitin oligosaccharide), a modified beta-1,4-linked N-acetylglucosamine oligosaccharide. This subunit is responsible for energy coupling to the transport system. The polypeptide is Nod factor export ATP-binding protein I (Paraburkholderia xenovorans (strain LB400)).